Reading from the N-terminus, the 194-residue chain is Protein GrpE (194 aa).

Basic and acidic residues-rich tracts occupy residues 1–19 and 26–44; these read MSKE…ENTS and KKEA…NQKL. The segment at 1 to 44 is disordered; it reads MSKEEFPSEKNLDKEENTSKPKKAVKKEAAKGEETKKNNENQKL.

The protein belongs to the GrpE family. As to quaternary structure, homodimer.

Its subcellular location is the cytoplasm. In terms of biological role, participates actively in the response to hyperosmotic and heat shock by preventing the aggregation of stress-denatured proteins, in association with DnaK and GrpE. It is the nucleotide exchange factor for DnaK and may function as a thermosensor. Unfolded proteins bind initially to DnaJ; upon interaction with the DnaJ-bound protein, DnaK hydrolyzes its bound ATP, resulting in the formation of a stable complex. GrpE releases ADP from DnaK; ATP binding to DnaK triggers the release of the substrate protein, thus completing the reaction cycle. Several rounds of ATP-dependent interactions between DnaJ, DnaK and GrpE are required for fully efficient folding. The polypeptide is Protein GrpE (Lactobacillus acidophilus (strain ATCC 700396 / NCK56 / N2 / NCFM)).